Here is a 431-residue protein sequence, read N- to C-terminus: Acyl transferase 8 (431 aa).

The active-site Proton acceptor is the His169. Disordered stretches follow at residues 220–247 (VADARGGVRPGVPRPRVLRHERAPRAPA), 260–313 (HHAG…DHLR), and 331–400 (GLRV…PPPT). Residues 224-234 (RGGVRPGVPRP) are compositionally biased toward low complexity. The span at 264 to 273 (DGGGGGGGGR) shows a compositional bias: gly residues. Basic residues-rich tracts occupy residues 297–306 (ERRRRRRRGR) and 335–380 (GRPR…RRLP). A compositionally biased stretch (basic and acidic residues) spans 381 to 394 (QRHDAPRLITERAH).

This sequence belongs to the plant acyltransferase family.

Involved in the incorporation of ferulate into the cell wall. May act as arabinoxylan feruloyl transferase. This chain is Acyl transferase 8, found in Oryza sativa subsp. japonica (Rice).